A 595-amino-acid chain; its full sequence is Putative terpenoid synthase 16 (595 aa).

Mg(2+)-binding residues include D349, D353, N494, and D502. The short motif at D349–D353 is the DDXXD motif element.

Belongs to the terpene synthase family. Tpsa subfamily. It depends on Mg(2+) as a cofactor. Mn(2+) serves as cofactor.

It is found in the cytoplasm. Its pathway is secondary metabolite biosynthesis; terpenoid biosynthesis. The sequence is that of Putative terpenoid synthase 16 (TPS16) from Arabidopsis thaliana (Mouse-ear cress).